A 398-amino-acid polypeptide reads, in one-letter code: 1-deoxy-D-xylulose 5-phosphate reductoisomerase (398 aa).

NADPH contacts are provided by Thr14, Gly15, Ser16, Ile17, Gln42, and Asn128. Lys129 is a binding site for 1-deoxy-D-xylulose 5-phosphate. Glu130 is a binding site for NADPH. Asp154 is a Mn(2+) binding site. Ser155, Glu156, Ser185, and His208 together coordinate 1-deoxy-D-xylulose 5-phosphate. Glu156 is a Mn(2+) binding site. Position 214 (Gly214) interacts with NADPH. Ser221, Asn226, Lys227, and Glu230 together coordinate 1-deoxy-D-xylulose 5-phosphate. A Mn(2+)-binding site is contributed by Glu230.

Belongs to the DXR family. Requires Mg(2+) as cofactor. The cofactor is Mn(2+).

It catalyses the reaction 2-C-methyl-D-erythritol 4-phosphate + NADP(+) = 1-deoxy-D-xylulose 5-phosphate + NADPH + H(+). It participates in isoprenoid biosynthesis; isopentenyl diphosphate biosynthesis via DXP pathway; isopentenyl diphosphate from 1-deoxy-D-xylulose 5-phosphate: step 1/6. Functionally, catalyzes the NADPH-dependent rearrangement and reduction of 1-deoxy-D-xylulose-5-phosphate (DXP) to 2-C-methyl-D-erythritol 4-phosphate (MEP). The polypeptide is 1-deoxy-D-xylulose 5-phosphate reductoisomerase (Dechloromonas aromatica (strain RCB)).